The chain runs to 354 residues: Long form salivary protein D7L3 (354 aa).

The signal sequence occupies residues 1-26 (MQLTPRSVHLVHLLLAATTLISPSWS).

This sequence belongs to the PBP/GOBP family.

The protein localises to the secreted. Modulates blood feeding of female mosquitoes on vertebrate species by binding and sequestering different mediators involved in the host response. Binds serotonin with high affinity. Binds weakly noradrenaline and histamine. Does not bind tryptamine, octopamine, dopamine, adrenaline, leukotriene C4, leukotriene D4, leukotriene B4, ADP and U-46619, a stable analog of thromboxane A2. Inhibits agonist-induced platelet aggregation. Exhibits vasodilating activity. The polypeptide is Long form salivary protein D7L3 (Anopheles gambiae (African malaria mosquito)).